Consider the following 409-residue polypeptide: Multifunctional CCA protein (409 aa).

Gly8 and Arg11 together coordinate ATP. Residues Gly8 and Arg11 each coordinate CTP. Positions 21 and 23 each coordinate Mg(2+). ATP is bound by residues Arg91, Arg137, and Arg140. CTP contacts are provided by Arg91, Arg137, and Arg140. Residues 228-329 (TGVHVLSVLE…LELLQSFDVY (102 aa)) enclose the HD domain.

This sequence belongs to the tRNA nucleotidyltransferase/poly(A) polymerase family. Bacterial CCA-adding enzyme type 1 subfamily. In terms of assembly, monomer. Can also form homodimers and oligomers. The cofactor is Mg(2+). Ni(2+) is required as a cofactor.

It carries out the reaction a tRNA precursor + 2 CTP + ATP = a tRNA with a 3' CCA end + 3 diphosphate. It catalyses the reaction a tRNA with a 3' CCA end + 2 CTP + ATP = a tRNA with a 3' CCACCA end + 3 diphosphate. Catalyzes the addition and repair of the essential 3'-terminal CCA sequence in tRNAs without using a nucleic acid template. Adds these three nucleotides in the order of C, C, and A to the tRNA nucleotide-73, using CTP and ATP as substrates and producing inorganic pyrophosphate. tRNA 3'-terminal CCA addition is required both for tRNA processing and repair. Also involved in tRNA surveillance by mediating tandem CCA addition to generate a CCACCA at the 3' terminus of unstable tRNAs. While stable tRNAs receive only 3'-terminal CCA, unstable tRNAs are marked with CCACCA and rapidly degraded. In Pseudomonas savastanoi pv. phaseolicola (strain 1448A / Race 6) (Pseudomonas syringae pv. phaseolicola (strain 1448A / Race 6)), this protein is Multifunctional CCA protein.